Here is a 165-residue protein sequence, read N- to C-terminus: Destrin (165 aa).

Ala-2 carries the N-acetylalanine modification. A Phosphoserine modification is found at Ser-3. Positions 4–153 (GVQVADEVCR…NRTCIAEKLG (150 aa)) constitute an ADF-H domain. Position 19 is an N6-acetyllysine (Lys-19). A Nuclear localization signal motif is present at residues 30-34 (KKRKK).

Belongs to the actin-binding proteins ADF family. In terms of processing, ISGylated. As to expression, widely expressed. Not found in skeletal muscle.

Functionally, actin-depolymerizing protein. Severs actin filaments (F-actin) and binds to actin monomers (G-actin). Acts in a pH-independent manner. This is Destrin (Dstn) from Mus musculus (Mouse).